The sequence spans 823 residues: DNA topoisomerase 4 subunit A (823 aa).

A Topo IIA-type catalytic domain is found at 30-496 (LPDIRDGLKP…KAIEIDTASL (467 aa)). Tyr-118 acts as the O-(5'-phospho-DNA)-tyrosine intermediate in catalysis.

Belongs to the type II topoisomerase GyrA/ParC subunit family. ParC type 2 subfamily. Heterotetramer composed of ParC and ParE.

The protein localises to the cell membrane. It carries out the reaction ATP-dependent breakage, passage and rejoining of double-stranded DNA.. Inhibited by quinolones, such as levofloxacin. Its function is as follows. Topoisomerase IV is essential for chromosome segregation. It relaxes supercoiled DNA. Performs the decatenation events required during the replication of a circular DNA molecule. This Streptococcus pneumoniae serotype 4 (strain ATCC BAA-334 / TIGR4) protein is DNA topoisomerase 4 subunit A.